The sequence spans 77 residues: P fimbrial regulatory protein KS71A (77 aa).

This is P fimbrial regulatory protein KS71A (KS71A) from Escherichia coli.